Here is an 896-residue protein sequence, read N- to C-terminus: Probable sodium/sulfate cotransporter 3 (896 aa).

The next 5 membrane-spanning stretches (helical) occupy residues 1-21 (MAAIGWPGIVAIISVAISFII), 47-69 (IITVAKAAAGYGNTGLLTVIFLY), 106-126 (VMVLSAFLNNTPCVTFMIPIL), 140-160 (LLIPLSYAAVLGGTCTSIGTS), and 186-206 (MFDIAPYGVPYALMGFVFIIL). RCK C-terminal domains follow at residues 212–296 (LPGN…EFGL), 319–404 (TAFH…FKIN), 408–493 (LRFV…FPGL), and 499–586 (EQVD…KAFV). Helical transmembrane passes span 602-622 (MAIGVLLVVGMVLTQIVGGLK), 626-646 (YIHLWPAAVLTAALMLLTGCM), 654-674 (AIMWDVYLTIAAAFGVSAALE), 685-705 (AIISIGKSIGGDGPALIAIYV), 734-754 (LKIPAVDISVAIMLGASAGFI), 776-796 (FATIGAPFQIWLMVVASFILC), and 804-824 (VWIATWSITAFIVFVPALLTL). The tract at residues 857–881 (RAQSFGGKAMSVGSTESRTDGSSTP) is disordered. Positions 868 to 881 (VGSTESRTDGSSTP) are enriched in polar residues.

Belongs to the divalent anion:Na+ symporter (DASS) superfamily. Na+/sulfate symporter (TC 2.A.47.4) family.

The protein localises to the cell membrane. In terms of biological role, na(+)/sulfate cotransporter with a probable low-affinity for sulfate. This chain is Probable sodium/sulfate cotransporter 3 (SLT3), found in Chlamydomonas reinhardtii (Chlamydomonas smithii).